Here is a 213-residue protein sequence, read N- to C-terminus: Peptidyl-tRNA hydrolase (213 aa).

Tyrosine 26 contacts tRNA. The Proton acceptor role is filled by histidine 31. Residues tyrosine 78, asparagine 80, and asparagine 126 each coordinate tRNA.

It belongs to the PTH family. As to quaternary structure, monomer.

It is found in the cytoplasm. It carries out the reaction an N-acyl-L-alpha-aminoacyl-tRNA + H2O = an N-acyl-L-amino acid + a tRNA + H(+). Its function is as follows. Hydrolyzes ribosome-free peptidyl-tRNAs (with 1 or more amino acids incorporated), which drop off the ribosome during protein synthesis, or as a result of ribosome stalling. Catalyzes the release of premature peptidyl moieties from peptidyl-tRNA molecules trapped in stalled 50S ribosomal subunits, and thus maintains levels of free tRNAs and 50S ribosomes. This chain is Peptidyl-tRNA hydrolase, found in Trichormus variabilis (strain ATCC 29413 / PCC 7937) (Anabaena variabilis).